Reading from the N-terminus, the 249-residue chain is 2,3-bisphosphoglycerate-dependent phosphoglycerate mutase (249 aa).

Substrate-binding positions include R8 to N15, T21 to G22, R60, E87 to Y90, K98, R114 to R115, and G183 to N184. H9 (tele-phosphohistidine intermediate) is an active-site residue. The active-site Proton donor/acceptor is the E87.

It belongs to the phosphoglycerate mutase family. BPG-dependent PGAM subfamily. As to quaternary structure, homodimer.

It catalyses the reaction (2R)-2-phosphoglycerate = (2R)-3-phosphoglycerate. The protein operates within carbohydrate degradation; glycolysis; pyruvate from D-glyceraldehyde 3-phosphate: step 3/5. In terms of biological role, catalyzes the interconversion of 2-phosphoglycerate and 3-phosphoglycerate. This Azoarcus sp. (strain BH72) protein is 2,3-bisphosphoglycerate-dependent phosphoglycerate mutase.